The sequence spans 1080 residues: MAPRRNSNISSSGNSTQQQHQQQLQQQHQTQQHQLLQFYAENVNSSGVLMAPMQGTGGVGGVGGGGMVHCCLPSGDCRKLDTLIHLNELSLADCIRVLCNNENCSAGQYMHRECFEWWEASVLQALKANGRARSWSERQRLQHLWTKKGYELVQKACSCKCGRGQLRKDLDWVPPSSQGVIYLNGSGNRPTLANGSLSEDDDKKKAKKKRNRNNNNNNGGGGGGGAGVNGNTKTPLSNNNGNSYAGLTPNPNVGVIGSGLPHNNGNTASNGSSGNNGSSGVLQTSALATFSNILNTNNVLGLDLRARAGSLSSSGAGSGSTSPSDSQSSGEISVSPVQQLLPQQQQQQQQSLLIQPLGPAFGSNLLQNGLGLSKNLLIAPQQQQQQQLQQQQQQQNNLPALANISNFKPLASYEQQQLVQQQKNKEVELYSDRVRSTSGCNGIFSRRLDFSSFNLLPKTRLNSYQVKIEDEGNHGNDETRLFILSSLAQSQMSRVACILCEEPLLVFDRYPLVDGSFFLSPKQHSSGCIEVKYEGRTLYLTCVCMSCLDGTSSSRAINCRFCKEPWDGSSLVLGTMYAYDIFAAMPCCAERFKCNNCFKMLMHPQQRLSFYSDYSHGVTCPYCNTQDTHFVKPLTFCYAKTTATRLPTLAXHEAPLESPVGTGATTTQVPNAQGSPTASGCSSNTIASKQPPKQPLYNAAIDYSAPLQQQINPDLIGAHPHAQQHQQQVRQQQQQQQQQQPQQQQQQQQQQTQQQQSQQQQQQQQQQHQPVVSTFQRGNFPQQSHKTMNMMAMADVMSKYQQQQHQQQQQQRQQQHNLQPQQQHATQKGLEGLLLTNTNTSNNNSSSSSSSSISNLIISHNSASNTGNKMQPTWGQSDAISALWGCSSSSSGCSSGSGSQPSLSPTASSNGNDGSKMMLWAAQSSPQNAATLRDGFKELQRQQPPQQQVPQQQPHAASPTASLTSSSSSSNGWSASHYGKPNIWELPGSTGQRTPASSHDIFTDLLCNLSISQDNSSQQASSKADASDVSSNSSSSAGELLEAANIWRFPEYASSQLYMEEPTGGAAACMQLFNDYLNMN.

Disordered regions lie at residues 1 to 27, 181 to 277, 310 to 335, 655 to 693, 798 to 826, 891 to 916, and 940 to 974; these read MAPR…LQQQ, IYLN…GNNG, SLSS…ISVS, PLES…QPPK, SKYQ…QHAT, SGCS…DGSK, and QRQQ…NGWS. Residues 181–197 show a composition bias toward polar residues; the sequence is IYLNGSGNRPTLANGSL. Gly residues predominate over residues 218–228; sequence NGGGGGGGAGV. The segment covering 232–251 has biased composition (polar residues); that stretch reads TKTPLSNNNGNSYAGLTPNP. Positions 263–277 are enriched in low complexity; it reads NNGNTASNGSSGNNG. Residues 663-688 are compositionally biased toward polar residues; sequence GATTTQVPNAQGSPTASGCSSNTIAS. The span at 801 to 826 shows a compositional bias: low complexity; that stretch reads QQQQHQQQQQQRQQQHNLQPQQQHAT. Polar residues predominate over residues 900–913; that stretch reads QPSLSPTASSNGND. A compositionally biased stretch (low complexity) spans 941–974; sequence RQQPPQQQVPQQQPHAASPTASLTSSSSSSNGWS.

Expressed in all imaginal cells of the embryo and larvae. Expressed in a subset of tracheal fusion cells from stage 14 to the end of embryogenesis in metameres 2-9, lateral trunk and ventral anastomoses.

The protein resides in the cytoplasm. In terms of biological role, required for imaginal cell differentiation, may be involved in hormonal responsiveness during metamorphosis. Involved in an inhibitory signaling mechanism to determine the number of cells that will form unicellular sprouts in the trachea. Regulated by transcription factor esg. The longer hdc protein is completely functional and the shorter protein carries some function. The chain is Headcase protein from Drosophila melanogaster (Fruit fly).